Consider the following 534-residue polypeptide: Blue-light-activated protein (534 aa).

The PAS domain occupies 20 to 93; sequence GKDIFFAAVE…QSIRDAIDQR (74 aa). Residue Cys-70 is modified to S-4a-FMN cysteine. Positions 94–148 constitute a PAC domain; the sequence is VDISTEILNYRKDGSSFWNALFISPVYNDAGELIYFFASQLDISRRRDAEEALRQ. The 230-residue stretch at 161-390 folds into the Histidine kinase domain; sequence GIAHDFNNLL…TLRLYFPVDE (230 aa). His-164 bears the Phosphohistidine; by autocatalysis mark. Positions 411-527 constitute a Response regulatory domain; that stretch reads RILIVEDRPD…DLARKVRQVL (117 aa). At Asp-461 the chain carries 4-aspartylphosphate.

In terms of processing, FMN binds covalently to cysteine after exposure to blue light and this bond is spontaneously broken in the dark.

It carries out the reaction ATP + protein L-histidine = ADP + protein N-phospho-L-histidine.. Its function is as follows. Photosensitive kinase and response regulator that is involved in increased bacterial virulence upon exposure to light. In Pseudomonas syringae pv. syringae (strain B728a), this protein is Blue-light-activated protein.